We begin with the raw amino-acid sequence, 264 residues long: Acetylglutamate kinase (264 aa).

Residues 40 to 41, arginine 62, and asparagine 158 contribute to the substrate site; that span reads GG.

The protein belongs to the acetylglutamate kinase family. ArgB subfamily.

It is found in the cytoplasm. The enzyme catalyses N-acetyl-L-glutamate + ATP = N-acetyl-L-glutamyl 5-phosphate + ADP. The protein operates within amino-acid biosynthesis; L-arginine biosynthesis; N(2)-acetyl-L-ornithine from L-glutamate: step 2/4. In terms of biological role, catalyzes the ATP-dependent phosphorylation of N-acetyl-L-glutamate. The protein is Acetylglutamate kinase of Cytophaga hutchinsonii (strain ATCC 33406 / DSM 1761 / CIP 103989 / NBRC 15051 / NCIMB 9469 / D465).